A 163-amino-acid chain; its full sequence is Jun dimerization protein 2 (163 aa).

Disordered regions lie at residues 1–20 (MMPGQIPDPSVTAGSLPGLG) and 59–89 (KRPQPVKSELDEEEERRKRRREKNKVAAARC). Residue Lys-65 forms a Glycyl lysine isopeptide (Lys-Gly) (interchain with G-Cter in SUMO2) linkage. Positions 72-135 (EERRKRRREK…QQLILMLNRH (64 aa)) constitute a bZIP domain. The segment at 74 to 96 (RRKRRREKNKVAAARCRNKKKER) is basic motif. The tract at residues 100 to 128 (LQRESERLELMNAELKTQIEELKLERQQL) is leucine-zipper. Thr-148 is subject to Phosphothreonine; by MAPK8.

The protein belongs to the bZIP family. ATF subfamily. Forms a homodimer or heterodimer with JUN, JUNB, JUND, CEBPG and ATF2 thereby inhibiting transactivation by JUN, ATF2 and CEBPG. Binds multiple DNA elements such as cAMP-response element (CRE) and TPA response element (TRE) either as homodimer or heterodimer. Interacts with IRF2BP1. Post-translationally, phosphorylation of Thr-148 by MAPK8 in response to different stress conditions such as, UV irradiation, oxidatives stress and anisomycin treatments. In terms of processing, polyubiquitinated; probably by IRF2BP1. In terms of tissue distribution, ubiquitously expressed in all adult tissues tested as well in embryos.

The protein resides in the nucleus. Component of the AP-1 transcription factor that represses transactivation mediated by the Jun family of proteins. Involved in a variety of transcriptional responses associated with AP-1, such as UV-induced apoptosis, cell differentiation, tumorigenesis and antitumogeneris. Can also function as a repressor by recruiting histone deacetylase 3/HDAC3 to the promoter region of JUN. May control transcription via direct regulation of the modification of histones and the assembly of chromatin. This chain is Jun dimerization protein 2 (Jdp2), found in Mus musculus (Mouse).